Reading from the N-terminus, the 300-residue chain is Glutamyl-Q tRNA(Asp) synthetase (300 aa).

L-glutamate contacts are provided by residues 14 to 18 (RFAPT) and Glu-50. The 'HIGH' region motif lies at 17–27 (PTPSGFLHFGS). Cys-106, Cys-108, Tyr-120, and Cys-124 together coordinate Zn(2+). Tyr-177 and Arg-195 together coordinate L-glutamate. A 'KMSKS' region motif is present at residues 233–237 (KLGKS). Lys-236 contributes to the ATP binding site.

This sequence belongs to the class-I aminoacyl-tRNA synthetase family. GluQ subfamily. Zn(2+) serves as cofactor.

Functionally, catalyzes the tRNA-independent activation of glutamate in presence of ATP and the subsequent transfer of glutamate onto a tRNA(Asp). Glutamate is transferred on the 2-amino-5-(4,5-dihydroxy-2-cyclopenten-1-yl) moiety of the queuosine in the wobble position of the QUC anticodon. The polypeptide is Glutamyl-Q tRNA(Asp) synthetase (Pseudomonas putida (strain ATCC 47054 / DSM 6125 / CFBP 8728 / NCIMB 11950 / KT2440)).